The following is a 213-amino-acid chain: Charged multivesicular body protein 2b (213 aa).

Position 2 is an N-acetylalanine (Ala2). Residues 25–55 adopt a coiled-coil conformation; it reads QRAIIRDRAALEKQEKQLELEIKKMAKIGNK. Low complexity predominate over residues 179 to 194; the sequence is AKAPSAARSLPSASTS. The tract at residues 179 to 199 is disordered; sequence AKAPSAARSLPSASTSKATIS. Ser199 bears the Phosphoserine mark. The MIT-interacting motif motif lies at 201–211; the sequence is EEIERQLKALG.

It belongs to the SNF7 family. Probable core component of the endosomal sorting required for transport complex III (ESCRT-III). ESCRT-III components are thought to multimerize to form a flat lattice on the perimeter membrane of the endosome. Several assembly forms of ESCRT-III may exist that interact and act sequentially. Interacts with CHMP2A. Interacts with VPS4A. Interacts with VPS4B; the interaction is direct. In terms of tissue distribution, widely expressed. Expressed in brain, heart, skeletal muscle, spleen, kidney, liver, small intestine, pancreas, lung, placenta and leukocytes. In brain, it is expressed in cerebellum, cerebral cortex, medulla, spinal cord, occipital lobe, frontal lobe, temporal lobe and putamen.

Its subcellular location is the cytoplasm. It localises to the cytosol. The protein resides in the late endosome membrane. In terms of biological role, probable core component of the endosomal sorting required for transport complex III (ESCRT-III) which is involved in multivesicular bodies (MVBs) formation and sorting of endosomal cargo proteins into MVBs. MVBs contain intraluminal vesicles (ILVs) that are generated by invagination and scission from the limiting membrane of the endosome and mostly are delivered to lysosomes enabling degradation of membrane proteins, such as stimulated growth factor receptors, lysosomal enzymes and lipids. The MVB pathway appears to require the sequential function of ESCRT-O, -I,-II and -III complexes. ESCRT-III proteins mostly dissociate from the invaginating membrane before the ILV is released. The ESCRT machinery also functions in topologically equivalent membrane fission events, such as the terminal stages of cytokinesis and the budding of enveloped viruses (HIV-1 and other lentiviruses). ESCRT-III proteins are believed to mediate the necessary vesicle extrusion and/or membrane fission activities, possibly in conjunction with the AAA ATPase VPS4. In Homo sapiens (Human), this protein is Charged multivesicular body protein 2b (CHMP2B).